The primary structure comprises 142 residues: Sorting nexin-3 (142 aa).

The region spanning 21-138 (NFLEIEVRNP…AAFVQDPNWD (118 aa)) is the PX domain. Residues R64, S66, K90, R95, and R104 each coordinate a 1,2-diacyl-sn-glycero-3-phospho-(1D-myo-inositol-3-phosphate).

Belongs to the sorting nexin family.

Its subcellular location is the cytoplasm. The protein localises to the golgi apparatus membrane. It localises to the prevacuolar compartment membrane. In terms of biological role, required for retention of late Golgi membrane proteins. Component of the retrieval machinery that functions by direct interaction with the cytosolic tails of certain TGN membrane proteins during the sorting/budding process at the prevacuolar compartment. Binds phosphatidylinositol 3-phosphate (PtdIns(P3)). The chain is Sorting nexin-3 (snx-3) from Neurospora crassa (strain ATCC 24698 / 74-OR23-1A / CBS 708.71 / DSM 1257 / FGSC 987).